A 131-amino-acid polypeptide reads, in one-letter code: Peptide methionine sulfoxide reductase MsrB (131 aa).

Positions 8-130 (LDTWREELTD…NSLSLKLVPR (123 aa)) constitute a MsrB domain. Cys-47, Cys-50, Cys-96, and Cys-99 together coordinate Zn(2+). The active-site Nucleophile is the Cys-119.

This sequence belongs to the MsrB Met sulfoxide reductase family. The cofactor is Zn(2+).

The catalysed reaction is L-methionyl-[protein] + [thioredoxin]-disulfide + H2O = L-methionyl-(R)-S-oxide-[protein] + [thioredoxin]-dithiol. In Ectopseudomonas mendocina (strain ymp) (Pseudomonas mendocina), this protein is Peptide methionine sulfoxide reductase MsrB.